The chain runs to 122 residues: UPF0145 protein TV0671 (122 aa).

Belongs to the UPF0145 family.

The protein is UPF0145 protein TV0671 of Thermoplasma volcanium (strain ATCC 51530 / DSM 4299 / JCM 9571 / NBRC 15438 / GSS1).